Reading from the N-terminus, the 233-residue chain is Probable RNA 2'-phosphotransferase (233 aa).

This sequence belongs to the KptA/TPT1 family.

Functionally, removes the 2'-phosphate from RNA via an intermediate in which the phosphate is ADP-ribosylated by NAD followed by a presumed transesterification to release the RNA and generate ADP-ribose 1''-2''-cyclic phosphate (APPR&gt;P). May function as an ADP-ribosylase. The chain is Probable RNA 2'-phosphotransferase from Hyperthermus butylicus (strain DSM 5456 / JCM 9403 / PLM1-5).